Consider the following 177-residue polypeptide: Large ribosomal subunit protein uL6 (177 aa).

Belongs to the universal ribosomal protein uL6 family. As to quaternary structure, part of the 50S ribosomal subunit.

Its function is as follows. This protein binds to the 23S rRNA, and is important in its secondary structure. It is located near the subunit interface in the base of the L7/L12 stalk, and near the tRNA binding site of the peptidyltransferase center. The sequence is that of Large ribosomal subunit protein uL6 from Pseudomonas fluorescens (strain Pf0-1).